The sequence spans 500 residues: Cytochrome P450 2D27 (500 aa).

Cys446 serves as a coordination point for heme.

It belongs to the cytochrome P450 family. The cofactor is heme. In terms of tissue distribution, expressed in liver, but not in kidney, small intestine, and brain.

The protein resides in the endoplasmic reticulum membrane. The protein localises to the microsome membrane. Has bufuralol 1'-hydroxylase and debrisoquine 4-hydroxylase activities. The protein is Cytochrome P450 2D27 (CYP2D27) of Mesocricetus auratus (Golden hamster).